The chain runs to 93 residues: Alpha-defensin 9 (93 aa).

Positions 1-19 are cleaved as a signal peptide; it reads MKTLVLLSALVLLAFQVQA. Positions 20-58 are excised as a propeptide; it reads DPIQNTDEETKTEEQPGEEDQAVSVSFGDPEGSSLQEES. A disordered region spans residues 23 to 56; the sequence is QNTDEETKTEEQPGEEDQAVSVSFGDPEGSSLQE. 3 disulfide bridges follow: Cys-64-Cys-92, Cys-66-Cys-81, and Cys-71-Cys-91.

This sequence belongs to the alpha-defensin family. As to expression, paneth cells of the small bowel.

It is found in the secreted. Functionally, probably contributes to the antimicrobial barrier function of the small bowel mucosa. The sequence is that of Alpha-defensin 9 (Defa9) from Mus musculus (Mouse).